Here is a 496-residue protein sequence, read N- to C-terminus: Splicing factor U2AF 65 kDa subunit (496 aa).

The segment covering 1 to 26 (MSDHQDGMKLEDIERQFLDVAQREGG) has biased composition (basic and acidic residues). Positions 1–142 (MSDHQDGMKL…PKKYRFWDVP (142 aa)) are disordered. The span at 59-77 (KKRKRSRSRDRDTRRRSRS) shows a compositional bias: basic residues. Basic and acidic residues-rich tracts occupy residues 78-96 (RDRGERRGGGGGGDRDRSR) and 105-138 (GGRDEPRRRGGDDEARSRREPEPQKPREPKKYRF). 3 RRM domains span residues 184 to 266 (RRLY…RPRD), 291 to 368 (NKIF…LACA), and 404 to 488 (NMVT…YYDV).

As to quaternary structure, forms a heterodimer with the U2AF small subunit.

It localises to the nucleus. Functionally, necessary for the splicing of pre-mRNA. Binds to the polypyrimidine tract of introns early during spliceosome assembly. This Caenorhabditis elegans protein is Splicing factor U2AF 65 kDa subunit (uaf-1).